The chain runs to 214 residues: dITP/XTP pyrophosphatase (214 aa).

Residue 13–18 coordinates substrate; the sequence is SHNKGK. The Mg(2+) site is built by E45 and D74. Residue D74 is the Proton acceptor of the active site. Residues S75, 163–166, K186, and 199–200 each bind substrate; these read FGYD and HR.

The protein belongs to the HAM1 NTPase family. In terms of assembly, homodimer. The cofactor is Mg(2+).

The catalysed reaction is XTP + H2O = XMP + diphosphate + H(+). The enzyme catalyses dITP + H2O = dIMP + diphosphate + H(+). It carries out the reaction ITP + H2O = IMP + diphosphate + H(+). Pyrophosphatase that catalyzes the hydrolysis of nucleoside triphosphates to their monophosphate derivatives, with a high preference for the non-canonical purine nucleotides XTP (xanthosine triphosphate), dITP (deoxyinosine triphosphate) and ITP. Seems to function as a house-cleaning enzyme that removes non-canonical purine nucleotides from the nucleotide pool, thus preventing their incorporation into DNA/RNA and avoiding chromosomal lesions. This is dITP/XTP pyrophosphatase from Agrobacterium fabrum (strain C58 / ATCC 33970) (Agrobacterium tumefaciens (strain C58)).